The sequence spans 451 residues: Chromosomal replication initiator protein DnaA (451 aa).

Residues 1–72 (MSLPTSLWDK…TELLDELSDT (72 aa)) are domain I, interacts with DnaA modulators. The segment at 72 to 114 (TPPQIRLQIGSRSTEMPTKNSHEPSHRKAAAPPAGTTISHTQA) is domain II. A compositionally biased stretch (polar residues) spans 81–90 (GSRSTEMPTK). The disordered stretch occupies residues 81-106 (GSRSTEMPTKNSHEPSHRKAAAPPAG). A domain III, AAA+ region region spans residues 115 to 331 (NINSNFTFDS…GALKRVIANA (217 aa)). Gly159, Gly161, Lys162, and Thr163 together coordinate ATP. The segment at 332-451 (HFTGQSITVD…YKNLMRILSG (120 aa)) is domain IV, binds dsDNA.

The protein belongs to the DnaA family. In terms of assembly, oligomerizes as a right-handed, spiral filament on DNA at oriC.

The protein resides in the cytoplasm. Functionally, plays an essential role in the initiation and regulation of chromosomal replication. ATP-DnaA binds to the origin of replication (oriC) to initiate formation of the DNA replication initiation complex once per cell cycle. Binds the DnaA box (a 9 base pair repeat at the origin) and separates the double-stranded (ds)DNA. Forms a right-handed helical filament on oriC DNA; dsDNA binds to the exterior of the filament while single-stranded (ss)DNA is stabiized in the filament's interior. The ATP-DnaA-oriC complex binds and stabilizes one strand of the AT-rich DNA unwinding element (DUE), permitting loading of DNA polymerase. After initiation quickly degrades to an ADP-DnaA complex that is not apt for DNA replication. Binds acidic phospholipids. The chain is Chromosomal replication initiator protein DnaA from Coxiella burnetii (strain CbuK_Q154) (Coxiella burnetii (strain Q154)).